Consider the following 75-residue polypeptide: Sec-independent protein translocase protein TatA (75 aa).

A helical membrane pass occupies residues 1–21 (MGMPSMPELLIVLAIVVLLFG). Residues 47–75 (DEEEEVKEITKKEEPKVEAAAEEKKSENA) form a disordered region. The segment covering 53-75 (KEITKKEEPKVEAAAEEKKSENA) has biased composition (basic and acidic residues).

Belongs to the TatA/E family. The Tat system comprises two distinct complexes: a TatABC complex, containing multiple copies of TatA, TatB and TatC subunits, and a separate TatA complex, containing only TatA subunits. Substrates initially bind to the TatABC complex, which probably triggers association of the separate TatA complex to form the active translocon.

The protein localises to the cell inner membrane. Functionally, part of the twin-arginine translocation (Tat) system that transports large folded proteins containing a characteristic twin-arginine motif in their signal peptide across membranes. TatA could form the protein-conducting channel of the Tat system. In Sulfurovum sp. (strain NBC37-1), this protein is Sec-independent protein translocase protein TatA.